A 37-amino-acid chain; its full sequence is Large ribosomal subunit protein bL36c (37 aa).

It belongs to the bacterial ribosomal protein bL36 family.

The protein localises to the plastid. The protein resides in the chloroplast. The protein is Large ribosomal subunit protein bL36c of Coffea arabica (Arabian coffee).